We begin with the raw amino-acid sequence, 285 residues long: Bifunctional protein FolD 2 (285 aa).

Residues 164 to 166 (GRS), Ser189, and Val230 each bind NADP(+).

It belongs to the tetrahydrofolate dehydrogenase/cyclohydrolase family. Homodimer.

It carries out the reaction (6R)-5,10-methylene-5,6,7,8-tetrahydrofolate + NADP(+) = (6R)-5,10-methenyltetrahydrofolate + NADPH. It catalyses the reaction (6R)-5,10-methenyltetrahydrofolate + H2O = (6R)-10-formyltetrahydrofolate + H(+). It functions in the pathway one-carbon metabolism; tetrahydrofolate interconversion. In terms of biological role, catalyzes the oxidation of 5,10-methylenetetrahydrofolate to 5,10-methenyltetrahydrofolate and then the hydrolysis of 5,10-methenyltetrahydrofolate to 10-formyltetrahydrofolate. The chain is Bifunctional protein FolD 2 from Geobacter metallireducens (strain ATCC 53774 / DSM 7210 / GS-15).